We begin with the raw amino-acid sequence, 98 residues long: DNA-directed RNA polymerase subunit Rpo11 (98 aa).

This sequence belongs to the archaeal Rpo11/eukaryotic RPB11/RPC19 RNA polymerase subunit family. In terms of assembly, part of the RNA polymerase complex.

It localises to the cytoplasm. It catalyses the reaction RNA(n) + a ribonucleoside 5'-triphosphate = RNA(n+1) + diphosphate. In terms of biological role, DNA-dependent RNA polymerase (RNAP) catalyzes the transcription of DNA into RNA using the four ribonucleoside triphosphates as substrates. The protein is DNA-directed RNA polymerase subunit Rpo11 of Korarchaeum cryptofilum (strain OPF8).